The chain runs to 743 residues: Adhesion defective protein 2 (743 aa).

Residues Met1–Arg36 are disordered. Residues Gln18–Gln28 show a composition bias toward basic and acidic residues. In terms of domain architecture, LisH spans Thr38 to Thr70. 4 disordered regions span residues Asn79–Pro127, Leu264–Val361, Arg379–Ser426, and Lys476–Asp692. Phosphoserine is present on Ser89. Over residues Ile98–Asn114 the composition is skewed to polar residues. A compositionally biased stretch (low complexity) spans Leu264–Gln281. Polar residues-rich tracts occupy residues Ser282–Thr297, Ile315–Gly353, Pro390–Lys399, Gln408–Ser426, and Thr482–Ala500. A compositionally biased stretch (low complexity) spans Lys501–Pro520. 2 stretches are compositionally biased toward polar residues: residues Val521 to Met544 and Asp556 to Glu566. The segment covering Asn567–Asn578 has biased composition (low complexity). The segment covering Trp586–Ser602 has biased composition (polar residues). Residues Pro612–Pro631 show a composition bias toward low complexity. Residues Asp661–Asn670 are compositionally biased toward polar residues. Positions Pro671–Thr688 are enriched in low complexity.

The protein belongs to the FLO8 family.

The protein localises to the cytoplasm. Its subcellular location is the nucleus. Its function is as follows. Probable transcriptional regulator involved in cell adhesion. This Schizosaccharomyces pombe (strain 972 / ATCC 24843) (Fission yeast) protein is Adhesion defective protein 2 (adn2).